Reading from the N-terminus, the 239-residue chain is Lactate utilization protein A (239 aa).

Belongs to the LutA/YkgE family.

Functionally, is involved in L-lactate degradation and allows cells to grow with lactate as the sole carbon source. This is Lactate utilization protein A from Bacillus cereus (strain G9842).